A 603-amino-acid polypeptide reads, in one-letter code: Membrane protein insertase YidC (603 aa).

Residues 7-27 (FFITIALSVLILAVWQYFYVL) traverse the membrane as a helical segment. Over residues 38-51 (RVEQQRVEEQKKAA) the composition is skewed to basic and acidic residues. The interval 38-76 (RVEQQRVEEQKKAAEAANPGAGTPAPAPGTIPNAPGGDT) is disordered. The span at 52-74 (EAANPGAGTPAPAPGTIPNAPGG) shows a compositional bias: low complexity. The next 5 membrane-spanning stretches (helical) occupy residues 352–372 (FDLL…FWLI), 378–398 (FLGN…ALFF), 452–472 (WPVA…YITI), 497–517 (LFGL…WPLI), and 540–560 (IFTW…AGLV).

Belongs to the OXA1/ALB3/YidC family. Type 1 subfamily. In terms of assembly, interacts with the Sec translocase complex via SecD. Specifically interacts with transmembrane segments of nascent integral membrane proteins during membrane integration.

It is found in the cell inner membrane. In terms of biological role, required for the insertion and/or proper folding and/or complex formation of integral membrane proteins into the membrane. Involved in integration of membrane proteins that insert both dependently and independently of the Sec translocase complex, as well as at least some lipoproteins. Aids folding of multispanning membrane proteins. This is Membrane protein insertase YidC from Mesorhizobium japonicum (strain LMG 29417 / CECT 9101 / MAFF 303099) (Mesorhizobium loti (strain MAFF 303099)).